The primary structure comprises 203 residues: Ribosome maturation factor RimP (203 aa).

The interval 179–203 (VSSEGEDGGEARQAPKLNPKKPGKK) is disordered.

It belongs to the RimP family.

Its subcellular location is the cytoplasm. Required for maturation of 30S ribosomal subunits. This Gluconobacter oxydans (strain 621H) (Gluconobacter suboxydans) protein is Ribosome maturation factor RimP.